Reading from the N-terminus, the 33-residue chain is uncharacterized protein (33 aa).

This is an uncharacterized protein from Staphylococcus aureus (strain N315).